The following is a 251-amino-acid chain: Hydroxyacylglutathione hydrolase (251 aa).

Zn(2+) is bound by residues H53, H55, D57, H58, H110, D127, and H165.

It belongs to the metallo-beta-lactamase superfamily. Glyoxalase II family. Monomer. Zn(2+) is required as a cofactor.

It catalyses the reaction an S-(2-hydroxyacyl)glutathione + H2O = a 2-hydroxy carboxylate + glutathione + H(+). Its pathway is secondary metabolite metabolism; methylglyoxal degradation; (R)-lactate from methylglyoxal: step 2/2. Functionally, thiolesterase that catalyzes the hydrolysis of S-D-lactoyl-glutathione to form glutathione and D-lactic acid. The polypeptide is Hydroxyacylglutathione hydrolase (Escherichia coli (strain ATCC 8739 / DSM 1576 / NBRC 3972 / NCIMB 8545 / WDCM 00012 / Crooks)).